Reading from the N-terminus, the 992-residue chain is Disks large-associated protein 4 (992 aa).

The span at 1–20 (MKGLGDSRPRHLSDSLDPPH) shows a compositional bias: basic and acidic residues. 2 disordered regions span residues 1 to 31 (MKGL…DRNP) and 154 to 226 (APSM…ASGL). The span at 162–171 (GKVGGNGGKK) shows a compositional bias: gly residues. Over residues 172–194 (GVLEDGKGRRAKSKERAKAGEPK) the composition is skewed to basic and acidic residues. A compositionally biased stretch (polar residues) spans 199 to 208 (SNISGWWSSD). 2 positions are modified to phosphoserine: S206 and S207. R290 bears the Omega-N-methylarginine mark. Disordered stretches follow at residues 342-435 (TTLL…SWEE), 527-665 (SVSL…RKLS), 677-751 (VPKE…GPRQ), 763-798 (SYGD…AQPG), and 915-992 (TPEK…QTRL). Residues S377, S380, S384, S388, S405, S415, and S421 each carry the phosphoserine modification. Polar residues predominate over residues 399-413 (LRATQQSLGEQSNPR). The segment covering 528 to 554 (VSLQSLSPPPSTGSLSNSRTLPSSSCL) has biased composition (low complexity). Positions 576-591 (VTVQSSTESAQDTYLD) are enriched in polar residues. 6 positions are modified to phosphoserine: S580, S581, S609, S611, S665, and S744. A compositionally biased stretch (low complexity) spans 600–620 (TSQSGLSNSSDSLDSSTRPPS). A Phosphothreonine modification is found at T915. Composition is skewed to basic and acidic residues over residues 915 to 925 (TPEKRKEEKKP) and 940 to 958 (VSRD…EARK). The span at 969–978 (VRQNSATESA) shows a compositional bias: polar residues. S973 carries the phosphoserine modification.

Belongs to the SAPAP family. Interacts with DLG1 and DLG4/PSD-95. In terms of tissue distribution, expressed in brain.

The protein localises to the membrane. Its function is as follows. May play a role in the molecular organization of synapses and neuronal cell signaling. Could be an adapter protein linking ion channel to the subsynaptic cytoskeleton. May induce enrichment of PSD-95/SAP90 at the plasma membrane. In Rattus norvegicus (Rat), this protein is Disks large-associated protein 4 (Dlgap4).